The chain runs to 948 residues: Valine--tRNA ligase (948 aa).

The 'HIGH' region signature appears at 40–50; the sequence is PNVTGSLHMGH. Residues 551-555 carry the 'KMSKS' region motif; the sequence is KMSKS. Position 554 (lysine 554) interacts with ATP. The stretch at 879-945 forms a coiled coil; the sequence is LIDKGAELAR…GKLAEQHARI (67 aa).

This sequence belongs to the class-I aminoacyl-tRNA synthetase family. ValS type 1 subfamily. Monomer.

Its subcellular location is the cytoplasm. The catalysed reaction is tRNA(Val) + L-valine + ATP = L-valyl-tRNA(Val) + AMP + diphosphate. In terms of biological role, catalyzes the attachment of valine to tRNA(Val). As ValRS can inadvertently accommodate and process structurally similar amino acids such as threonine, to avoid such errors, it has a 'posttransfer' editing activity that hydrolyzes mischarged Thr-tRNA(Val) in a tRNA-dependent manner. This Pseudomonas syringae pv. syringae (strain B728a) protein is Valine--tRNA ligase.